Consider the following 267-residue polypeptide: Probable beta-lactamase YbxI (267 aa).

Positions 1–23 (MKKWIYVVLVLSIAGIGGFSVHA) are cleaved as a signal peptide. The active-site Acyl-ester intermediate is serine 76. The residue at position 79 (lysine 79) is an N6-carboxylysine. Position 214–216 (214–216 (KTG)) interacts with substrate.

The protein belongs to the class-D beta-lactamase family.

It catalyses the reaction a beta-lactam + H2O = a substituted beta-amino acid. The chain is Probable beta-lactamase YbxI (ybxI) from Bacillus subtilis (strain 168).